The primary structure comprises 229 residues: MKFPILIINLKAYGEAAGKKALEIAKAAEKVAKELGVNIAVAPNHLELALVAQSVEIPVYAQGADVETPGAYTAHIAVDNIKAVGASGLILNHSEAPLALNQLSKLAARAKSIGLDVVICAPDPVTSLAAAALGPHAVAVEPPELIGTGKAVSKYKPETIIETVRLVTKHFPNVVVITGAGIETGEDVEAALKLGTKGVLLASAAVKAKDHYQKIFELAKPLTVAAEPP.

9 to 11 contributes to the substrate binding site; the sequence is NLK. Residue H93 is the Electrophile of the active site. E141 functions as the Proton acceptor in the catalytic mechanism. Substrate is bound by residues I146, G181, and 202 to 203; that span reads AS.

Belongs to the triosephosphate isomerase family. In terms of assembly, homotetramer; dimer of dimers.

It is found in the cytoplasm. It carries out the reaction D-glyceraldehyde 3-phosphate = dihydroxyacetone phosphate. The protein operates within carbohydrate biosynthesis; gluconeogenesis. It participates in carbohydrate degradation; glycolysis; D-glyceraldehyde 3-phosphate from glycerone phosphate: step 1/1. Its function is as follows. Involved in the gluconeogenesis. Catalyzes stereospecifically the conversion of dihydroxyacetone phosphate (DHAP) to D-glyceraldehyde-3-phosphate (G3P). This chain is Triosephosphate isomerase, found in Pyrobaculum islandicum (strain DSM 4184 / JCM 9189 / GEO3).